The chain runs to 237 residues: Coat protein (237 aa).

Residues 1-24 are disordered; sequence MSAPASTTQATGSTTSTTTKTAGA.

It belongs to the potexvirus capsid protein family.

It localises to the virion. Required for genome encapsidation. Forms ribonucleoprotein complexes along with TGB1 helicase and viral RNA. The sequence is that of Coat protein from Brassica campestris (Field mustard).